We begin with the raw amino-acid sequence, 622 residues long: Auxin efflux carrier component 1 (622 aa).

At 1–6 (MITAAD) the chain is on the extracellular side. The helical transmembrane segment at 7–27 (FYHVMTAMVPLYVAMILAYGS) threads the bilayer. The Cytoplasmic segment spans residues 28-44 (VKWWKIFTPDQCSGINR). A helical transmembrane segment spans residues 45–65 (FVALFAVPLLSFHFIAANNPY). Residue Val51 coordinates (indol-3-yl)acetate. Over 66–70 (AMNLR) the chain is Extracellular. Residues 71 to 91 (FLAADSLQKVIVLSLLFLWCK) traverse the membrane as a helical segment. At 92-100 (LSRNGSLDW) the chain is on the cytoplasmic side. Residues 101 to 121 (TITLFSLSTLPNTLVMGIPLL) traverse the membrane as a helical segment. Positions 112 and 114 each coordinate (indol-3-yl)acetate. The Extracellular portion of the chain corresponds to 122–131 (KGMYGNFSGD). N-linked (GlcNAc...) asparagine glycosylation occurs at Asn127. The helical transmembrane segment at 132–152 (LMVQIVVLQCIIWYTLMLFLF) threads the bilayer. Residue Tyr145 participates in (indol-3-yl)acetate binding. The Cytoplasmic segment spans residues 153–482 (EYRGAKLLIS…LIRNPNSYSS (330 aa)). A phosphoserine mark is found at Ser209, Ser212, Ser221, and Ser225. Residues 213–233 (RSDIYSRRSQGLSATPRPSNL) form a disordered region. Thr227 is modified (phosphothreonine). Position 231 is a phosphoserine (Ser231). Position 248 is a phosphothreonine (Thr248). A phosphoserine mark is found at Ser252, Ser253, and Ser271. Positions 268-362 (GRNSNFGPGE…PVVGGKRQDG (95 aa)) are disordered. Thr286 is subject to Phosphothreonine. Ser290 carries the post-translational modification Phosphoserine. Positions 298 to 311 (PAKPTAAGTAAGAG) are enriched in low complexity. Residue Thr302 is modified to Phosphothreonine. Phosphoserine is present on residues Ser317, Ser320, and Ser337. A Phosphothreonine modification is found at Thr340. Phosphoserine is present on residues Ser374, Ser377, Ser408, Ser414, Ser426, Ser434, and Ser446. Residues 483–503 (LFGITWSLISFKWNIEMPALI) form a helical membrane-spanning segment. Residues 504-506 (AKS) are Extracellular-facing. A helical transmembrane segment spans residues 507–527 (ISILSDAGLGMAMFSLGLFMA). Over 528 to 541 (LNPRIIACGNRRAA) the chain is Cytoplasmic. The chain crosses the membrane as a helical span at residues 542 to 562 (FAAAMRFVVGPAVMLVASYAV). Topologically, residues 563–566 (GLRG) are extracellular. Residues 567 to 587 (VLLHVAIIQAALPQGIVPFVF) traverse the membrane as a helical segment. The (indol-3-yl)acetate site is built by Ile582 and Val583. Residues 588–601 (AKEYNVHPDILSTA) lie on the Cytoplasmic side of the membrane. Residues 602-622 (VIFGMLIALPITLLYYILLGL) form a helical membrane-spanning segment.

Belongs to the auxin efflux carrier (TC 2.A.69.1) family. In terms of assembly, homodimer. Interacts with TOPP4. Interacts with FYPP1 and FYPP3. Component of a complex made of PINs (e.g. PIN1 and PIN2), MAB4/MELs (e.g. NPY1/MAB4 and NPY5/MEL1) and AGC kinases (e.g. D6PK and PID) at the plasma membrane. Binds directly to NPY5/MEL1. In terms of tissue distribution, expressed at the basal side of elongated parenchymatous xylem cells.

The protein resides in the cell membrane. With respect to regulation, auxin efflux carrier activity is competitively inhibited by naptalamate (N-1-naphthylphthalamic acid, NPA) but activated by D6PK-mediated phosphorylation. In terms of biological role, acts as a component of the auxin efflux carrier; this activity is enhanced when activated by D6PK-mediated phosphorylation. Binds auxins including indole-3-acetic acid (IAA), indole-3-butyric acid (IBA), indole-3-propionic acid (IPA) and 4-chloroindole-3-acetic acid (4-Cl-IAA). Seems to be involved in the basipetal auxin transport. Mediates the formation of auxin gradient which is required to ensure correct organogenesis. Coordinated polar localization of PIN1 is directly regulated by the vesicle trafficking process and apical-basal PIN1 polarity also depends on the phosphorylation of conserved serine residues by PID kinase. The ARF-GEF protein GNOM is required for the correct recycling of PIN1 between the plasma membrane and endosomal compartments. Recrutes NPY proteins (e.g. NPY1/MAB4 and NPY5/MEL1) to the plasma membrane in a polar basal localization in root epidermis; this activity is optimized by AGC kinases-mediated (e.g. D6PK and PID) phosphorylation that limits their lateral diffusion-based escape. The chain is Auxin efflux carrier component 1 from Arabidopsis thaliana (Mouse-ear cress).